The following is a 451-amino-acid chain: AAA-ATPase At3g28570, mitochondrial (451 aa).

Residues 1–48 (MFAENLTRIGSNVAGLFFVWSTLKRYFPRQIQQLLFNAIQRIPIFKRL) constitute a mitochondrion transit peptide. Residue 243–250 (GPPGTGKS) participates in ATP binding.

It belongs to the AAA ATPase family. BCS1 subfamily. Mg(2+) serves as cofactor.

Its subcellular location is the mitochondrion. The catalysed reaction is ATP + H2O = ADP + phosphate + H(+). This Arabidopsis thaliana (Mouse-ear cress) protein is AAA-ATPase At3g28570, mitochondrial.